Reading from the N-terminus, the 336-residue chain is Dihydroorotate dehydrogenase (quinone) (336 aa).

Residues 62 to 66 (AGLDK) and threonine 86 each bind FMN. Residue lysine 66 participates in substrate binding. 111-115 (NRMGF) serves as a coordination point for substrate. FMN is bound by residues asparagine 139 and asparagine 172. Asparagine 172 provides a ligand contact to substrate. Serine 175 serves as the catalytic Nucleophile. A substrate-binding site is contributed by asparagine 177. 2 residues coordinate FMN: lysine 217 and threonine 245. Substrate is bound at residue 246–247 (NT). Residues glycine 268, glycine 297, and 318–319 (YS) each bind FMN.

The protein belongs to the dihydroorotate dehydrogenase family. Type 2 subfamily. As to quaternary structure, monomer. FMN serves as cofactor.

It is found in the cell membrane. The enzyme catalyses (S)-dihydroorotate + a quinone = orotate + a quinol. Its pathway is pyrimidine metabolism; UMP biosynthesis via de novo pathway; orotate from (S)-dihydroorotate (quinone route): step 1/1. In terms of biological role, catalyzes the conversion of dihydroorotate to orotate with quinone as electron acceptor. The polypeptide is Dihydroorotate dehydrogenase (quinone) (Aliivibrio fischeri (strain MJ11) (Vibrio fischeri)).